The primary structure comprises 345 residues: METFVRLFKDSPQQRSNAWHATRRTQVGGSDLASILGLNPYKSYYITLAEKANLFKKNLNHAACSWGTLFERVSKDLLELFCQTTVIGDNIHIDGTYLGYPGHSNSPDGFCHLTLGYTQQSWEIKTIFNDVCYETTKRIPVLVEIKSPFNRKIKNSVPSYYMPQIQSGLALSPPISMGIYVEAMFRVCSIHQLGWNHETNTDIHPPESMLPLAWGIITICSTQEHTEAPQDFGTLNAEAFHQLLETLYQKNQYTIHYSMPYETACPEMSNVVGYFGWKVFIFQIIPVMKHPQFLKDKYPIIQQFLHDLHTLKTSPSPMEAYEKICCSKESLLSTEDIDDFTNMLT.

The protein belongs to the asfivirus D345L family. As to quaternary structure, interacts with IKKA/CHUK and IKBKB.

Its subcellular location is the host cytoplasm. In terms of biological role, plays a role in the negative regulation of host NF-kappa-B signaling pathway. Mechanistically, recruits IKKA/CHUK and IKBKB to suppress their kinase activity towards NFKBIA. The sequence is that of Protein D345L from Ornithodoros (relapsing fever ticks).